Consider the following 358-residue polypeptide: MKQIQVDLGVRSYPIYIGQNLMSDGETLSRYLLKKRILIVTNETVAPLYLKQIQETMASFGEVESVILPDGEQFKDLAHLDTIFTALLQQNYGRDSVLVALGGGVIGDMTGFAAACYQRGIDFIQIPTTLLSQVDSSVGGKTAVNHPLGKNMIGAFYQPQIVLIDTLCLHTLPAREFAAGMAEVIKYGIMWDADFFQWLEDNVTALKTLDAQALVYAISRCCEIKADVVSQDETEQGVRALLNLGHTFGHAIEAEMGYGNWLHGEAVSAGTVLAAQTAKALGLIDESIVCRIIQLLQAFDLPVRAPESMDFDSFIQHMRRDKKVLGGQIRLVLPTAIGRADVFSQVTESTLEQVIRCA.

NAD(+)-binding positions include 70-75 (DGEQFK), 104-108 (GVIGD), 128-129 (TT), K141, K150, and 168-171 (CLHT). Positions 183, 246, and 263 each coordinate Zn(2+).

The protein belongs to the sugar phosphate cyclases superfamily. Dehydroquinate synthase family. The cofactor is Co(2+). Zn(2+) is required as a cofactor. It depends on NAD(+) as a cofactor.

The protein resides in the cytoplasm. It catalyses the reaction 7-phospho-2-dehydro-3-deoxy-D-arabino-heptonate = 3-dehydroquinate + phosphate. It participates in metabolic intermediate biosynthesis; chorismate biosynthesis; chorismate from D-erythrose 4-phosphate and phosphoenolpyruvate: step 2/7. Its function is as follows. Catalyzes the conversion of 3-deoxy-D-arabino-heptulosonate 7-phosphate (DAHP) to dehydroquinate (DHQ). The chain is 3-dehydroquinate synthase from Shewanella baltica (strain OS155 / ATCC BAA-1091).